The sequence spans 330 residues: DNA-directed RNA polymerase subunit alpha (330 aa).

The interval 1 to 231 (MAILAFQKPD…IYHFMLFSDE (231 aa)) is alpha N-terminal domain (alpha-NTD). The segment at 253–330 (MRQLLKTKLV…DISKYKLDKE (78 aa)) is alpha C-terminal domain (alpha-CTD).

The protein belongs to the RNA polymerase alpha chain family. In terms of assembly, homodimer. The RNAP catalytic core consists of 2 alpha, 1 beta, 1 beta' and 1 omega subunit. When a sigma factor is associated with the core the holoenzyme is formed, which can initiate transcription.

The enzyme catalyses RNA(n) + a ribonucleoside 5'-triphosphate = RNA(n+1) + diphosphate. DNA-dependent RNA polymerase catalyzes the transcription of DNA into RNA using the four ribonucleoside triphosphates as substrates. The chain is DNA-directed RNA polymerase subunit alpha from Phocaeicola vulgatus (strain ATCC 8482 / DSM 1447 / JCM 5826 / CCUG 4940 / NBRC 14291 / NCTC 11154) (Bacteroides vulgatus).